Here is a 445-residue protein sequence, read N- to C-terminus: UDP-N-acetylmuramate--L-alanine ligase (445 aa).

Position 113-119 (113-119 (GSHGKTS)) interacts with ATP.

Belongs to the MurCDEF family.

It is found in the cytoplasm. The enzyme catalyses UDP-N-acetyl-alpha-D-muramate + L-alanine + ATP = UDP-N-acetyl-alpha-D-muramoyl-L-alanine + ADP + phosphate + H(+). It functions in the pathway cell wall biogenesis; peptidoglycan biosynthesis. Cell wall formation. This Enterococcus faecalis (strain ATCC 700802 / V583) protein is UDP-N-acetylmuramate--L-alanine ligase.